A 348-amino-acid chain; its full sequence is Phenylalanine--tRNA ligase alpha subunit (348 aa).

Glutamate 259 lines the Mg(2+) pocket.

Belongs to the class-II aminoacyl-tRNA synthetase family. Phe-tRNA synthetase alpha subunit type 1 subfamily. In terms of assembly, tetramer of two alpha and two beta subunits. Requires Mg(2+) as cofactor.

The protein resides in the cytoplasm. It catalyses the reaction tRNA(Phe) + L-phenylalanine + ATP = L-phenylalanyl-tRNA(Phe) + AMP + diphosphate + H(+). The protein is Phenylalanine--tRNA ligase alpha subunit of Levilactobacillus brevis (strain ATCC 367 / BCRC 12310 / CIP 105137 / JCM 1170 / LMG 11437 / NCIMB 947 / NCTC 947) (Lactobacillus brevis).